The following is a 556-amino-acid chain: Formate--tetrahydrofolate ligase (556 aa).

65–72 contributes to the ATP binding site; it reads TPAGEGKT.

It belongs to the formate--tetrahydrofolate ligase family.

It catalyses the reaction (6S)-5,6,7,8-tetrahydrofolate + formate + ATP = (6R)-10-formyltetrahydrofolate + ADP + phosphate. Its pathway is one-carbon metabolism; tetrahydrofolate interconversion. The sequence is that of Formate--tetrahydrofolate ligase from Hyphomonas neptunium (strain ATCC 15444).